Consider the following 652-residue polypeptide: Trypanothione synthetase (652 aa).

One can recognise a Peptidase C51 domain in the interval 34–174; that stretch reads SNKHDHFFSG…QHKDGVWTII (141 aa). 328 to 330 contributes to the ATP binding site; the sequence is RFD. Residues Asp330, Glu344, and Asn346 each contribute to the Mg(2+) site. ATP contacts are provided by residues Lys513, Lys548, Gly555, Gln583, and 618–620; that span reads IIT.

In the C-terminal section; belongs to the glutathionylspermidine synthase preATP-grasp family. Mg(2+) serves as cofactor. Post-translationally, the N-terminus is blocked.

It catalyses the reaction spermidine + glutathione + ATP = glutathionylspermidine + ADP + phosphate + H(+). It carries out the reaction glutathionylspermidine + glutathione + ATP = trypanothione + ADP + phosphate + H(+). Its function is as follows. Conjugates glutathione (gamma-Glu-Cys-Gly) and glutathionylspermidine to form trypanothione (N(1),N(8)-bis(glutathionyl)spermidine), which is involved in maintaining intracellular thiol redox and in defense against oxidants. This is Trypanothione synthetase (TRS) from Crithidia fasciculata.